The sequence spans 236 residues: F-box and leucine-rich protein 22 (236 aa).

The 46-residue stretch at 1-46 folds into the F-box domain; it reads MHITQLNRECLLCLFSFLDKDSRRSLSRTCSQLRDVFEDPTLWPLL. LRR repeat units lie at residues 15–40, 43–72, 98–123, 124–149, 150–175, and 176–201; these read FSFLDKDSRRSLSRTCSQLRDVFEDP, WPLLHFHSLAELKKDNFRLSPALRSLSICW, HESLVNDFLLQVCNRCPNLTSVTLSG, CGHVTDDCLARLLLSCPRLRTLRLEN, CARVTNRTLAAVAAHGRALQTLHVDF, and CRNVSAAGLLRLRAACPNLRLSAERS.

As to quaternary structure, directly interacts with SKP1 and CUL1. As to expression, enriched in cardiac muscle (at protein level).

It localises to the cytoplasm. The protein resides in the myofibril. It is found in the sarcomere. Its subcellular location is the z line. Its pathway is protein modification; protein ubiquitination. In terms of biological role, substrate-recognition component of the SCF (SKP1-CUL1-F-box protein)-type E3 ubiquitin ligase complex. Promotes ubiquitination of sarcomeric proteins alpha-actinin-2 (ACTN2) and filamin-C (FLNC). The protein is F-box and leucine-rich protein 22 (Fbxl22) of Mus musculus (Mouse).